Reading from the N-terminus, the 95-residue chain is Small ribosomal subunit protein bS20 (95 aa).

It belongs to the bacterial ribosomal protein bS20 family.

In terms of biological role, binds directly to 16S ribosomal RNA. The chain is Small ribosomal subunit protein bS20 from Ehrlichia chaffeensis (strain ATCC CRL-10679 / Arkansas).